Reading from the N-terminus, the 136-residue chain is Protein scalloped (136 aa).

Its subcellular location is the nucleus. Probable transcription factor that function in the regulation of cell-specific gene expression during drosophila development, particularly in the differentiation of the nervous system. The sequence is that of Protein scalloped (SD) from Junonia coenia (Peacock butterfly).